The chain runs to 46 residues: Mu-segestritoxin-Sf1c (46 aa).

Intrachain disulfides connect C3/C19, C10/C22, C18/C42, and C24/C40. Positions 31-33 (RPW) are keys region for toxin activity.

It belongs to the neurotoxin 16 (SFI) family. In terms of tissue distribution, expressed by the venom gland.

It localises to the secreted. Its function is as follows. Insecticidal toxin. It inhibits insect voltage-gated sodium channels (Nav) by partially blocking the channel pore in DUM neurons from the American cockroach, not by acting as a gating modifier. The inhibition is only partially reversible after prolonged washout. In vivo, the toxin causes flaccid paralysis followed by death when injected into Heliothis virescens larvae. It also causes uncoordinated movements followed by full paralysis to sheep blowflies (Lucilia cuprina). When the toxin is fused to snowdrop lectin, it is orally active against larvae of the tomato moth (Laconobia oleracea), the rice brown planthopper (Nilaparvata lugens), and the peach-potato aphid (Myzus persicae). The sequence is that of Mu-segestritoxin-Sf1c from Segestria florentina (Tube-web spider).